The primary structure comprises 489 residues: MSLTNLTLKAAIDGLAAREFTSVELTRAHIEAIEAARGLNAYILETPDKAIDMAAKSDARRALGEAGPLEGAPLGVKDLFCTNGVRTTACSKILENFVPTYESTVTSQLWRDGAVMLGKLNLDQFAMGSSNETSYFGPVTNPWRAQGSTKALTPGGSSGGSAAAVAADLCLGATATDTGGSIRQPAAFTGTVGIKPTYGRCSRWGVVAFASSLDQAGPIAKTVEDAALLLTSMSGHDPKDSTSLDIPVPDFTQFVGKSVKGLKIGIPKEYRVDNMPAEIEKLWQDGIAWLKEAGCEIVDISLPHTKYALPAYYIVAPAEASSNLARYDGMRYGLREEGANLTEIYENTRASGFGDEVKRRILIGTYVLSAGYYDAYYLKALKVRRRIAEDFDNAWTQCDAILTPTAPSAAFGLGENSNDPIAMYLNDVFTVTTNLAGLPGLSLPAGLDANGLPLGLQIIGKPLDEATVFSVAGAVEKAAGFTAKAEKWW.

Active-site charge relay system residues include Lys77 and Ser157. Residue Ser181 is the Acyl-ester intermediate of the active site.

The protein belongs to the amidase family. GatA subfamily. Heterotrimer of A, B and C subunits.

It catalyses the reaction L-glutamyl-tRNA(Gln) + L-glutamine + ATP + H2O = L-glutaminyl-tRNA(Gln) + L-glutamate + ADP + phosphate + H(+). Functionally, allows the formation of correctly charged Gln-tRNA(Gln) through the transamidation of misacylated Glu-tRNA(Gln) in organisms which lack glutaminyl-tRNA synthetase. The reaction takes place in the presence of glutamine and ATP through an activated gamma-phospho-Glu-tRNA(Gln). The chain is Glutamyl-tRNA(Gln) amidotransferase subunit A from Caulobacter vibrioides (strain ATCC 19089 / CIP 103742 / CB 15) (Caulobacter crescentus).